Here is a 255-residue protein sequence, read N- to C-terminus: Taurine import ATP-binding protein TauB (255 aa).

An ABC transporter domain is found at 2 to 229 (LQISHLYADY…RFVAGESSRS (228 aa)). Position 34–41 (34–41 (GPSGCGKT)) interacts with ATP.

Belongs to the ABC transporter superfamily. Taurine importer (TC 3.A.1.17.1) family. The complex is composed of two ATP-binding proteins (TauB), two transmembrane proteins (TauC) and a solute-binding protein (TauA).

It localises to the cell inner membrane. It catalyses the reaction taurine(out) + ATP + H2O = taurine(in) + ADP + phosphate + H(+). Functionally, part of the ABC transporter complex TauABC involved in taurine import. Responsible for energy coupling to the transport system. This Escherichia coli (strain K12) protein is Taurine import ATP-binding protein TauB.